The chain runs to 331 residues: Type II secretion system protein K (331 aa).

Residues 1–9 (MPSCRRQGG) constitute a propeptide, leader sequence. A helical membrane pass occupies residues 8-27 (GGMALLVVLLILSVMVIIAS). At 28 to 331 (NMSGRLQLEL…MLRRLNGGAE (304 aa)) the chain is on the periplasmic side.

It belongs to the GSP K family. In terms of assembly, type II secretion is composed of four main components: the outer membrane complex, the inner membrane complex, the cytoplasmic secretion ATPase and the periplasm-spanning pseudopilus. Interacts with core component ExeG. In terms of processing, cleaved by prepilin peptidase.

Its subcellular location is the cell inner membrane. Functionally, component of the type II secretion system required for the energy-dependent secretion of extracellular factors such as proteases and toxins from the periplasm. Plays a role in pseudopilus assembly and seems to control its length. Interacts with the pseudopilus tip complex that is critical for the recognition and binding of secretion substrates. The sequence is that of Type II secretion system protein K (exeK) from Aeromonas hydrophila.